Reading from the N-terminus, the 315-residue chain is MACAEFSFHVPSLEELAGVMQKGLKDNFADVQVSVVDCPDLTKEPFTFPVKGICGKTRIAEVGGVPYLLPLVNQKKVYDLNKIAKEIKLPGAFILGAGAGPFQTLGFNSEFMPVIQTESEHKPPVNGSYFAHVNPADGGCLLEKYSEKCHDFQCALLANLFASEGQPGKVIEVKAKRRTGPLNFVTCMRETLEKHYGNKPIGMGGTFIIQKGKVKSHIMPAEFSSCPLNSDEEVNKWLHFYEMKAPLVCLPVFVSRDPGFDLRLEHTHFFSRHGEGGHYHYDTTPDIVEYLGYFLPAEFLYRIDQPKETHSIGRD.

Zn(2+) contacts are provided by His266, His268, and His278.

As to quaternary structure, monomer. Zn(2+) serves as cofactor.

Its subcellular location is the nucleus. The protein resides in the cytoplasm. In terms of biological role, exhibits ester hydrolase activity on the substrate p-nitrophenyl acetate, in vitro. Regulates DNA damage and repair by regulating HIF1A degradation via chaperone-mediated autophagy (CMA). Its function is as follows. Probably non-functional. The chain is Ester hydrolase C11orf54 (C11orf54) from Homo sapiens (Human).